Here is a 96-residue protein sequence, read N- to C-terminus: Large ribosomal subunit protein uL23 (96 aa).

This sequence belongs to the universal ribosomal protein uL23 family. Part of the 50S ribosomal subunit. Contacts protein L29, and trigger factor when it is bound to the ribosome.

One of the early assembly proteins it binds 23S rRNA. One of the proteins that surrounds the polypeptide exit tunnel on the outside of the ribosome. Forms the main docking site for trigger factor binding to the ribosome. This Clostridium novyi (strain NT) protein is Large ribosomal subunit protein uL23.